The chain runs to 176 residues: Probable inosine/xanthosine triphosphatase (176 aa).

D36 is a binding site for Mg(2+).

Belongs to the YjjX NTPase family. Homodimer. The cofactor is Mg(2+). Mn(2+) serves as cofactor.

The catalysed reaction is XTP + H2O = XDP + phosphate + H(+). The enzyme catalyses ITP + H2O = IDP + phosphate + H(+). Functionally, phosphatase that hydrolyzes non-canonical purine nucleotides such as XTP and ITP to their respective diphosphate derivatives. Probably excludes non-canonical purines from DNA/RNA precursor pool, thus preventing their incorporation into DNA/RNA and avoiding chromosomal lesions. The sequence is that of Probable inosine/xanthosine triphosphatase from Saccharolobus islandicus (strain Y.G.57.14 / Yellowstone #1) (Sulfolobus islandicus).